The following is a 183-amino-acid chain: MNAYVRPALSLALLMTLLTGVLYPLAVTGVAQVAFPNQANGSLVRDEHGQVRGSALIAQDFQGDGWFHSRPSAGAYATVASSASNLSPSNPALAERVKGDAATLFQAQQGPVPQALLTTSGSGLDPHLPPEAVAYQIPRVAAARQLPVERLQALQEEATLHPLIGPPVVNVLALNQKIEQLSH.

Residues 11-31 (LALLMTLLTGVLYPLAVTGVA) form a helical membrane-spanning segment.

The protein belongs to the KdpC family. As to quaternary structure, the system is composed of three essential subunits: KdpA, KdpB and KdpC.

It localises to the cell inner membrane. Part of the high-affinity ATP-driven potassium transport (or Kdp) system, which catalyzes the hydrolysis of ATP coupled with the electrogenic transport of potassium into the cytoplasm. This subunit acts as a catalytic chaperone that increases the ATP-binding affinity of the ATP-hydrolyzing subunit KdpB by the formation of a transient KdpB/KdpC/ATP ternary complex. This is Potassium-transporting ATPase KdpC subunit from Pseudomonas putida (strain GB-1).